We begin with the raw amino-acid sequence, 388 residues long: Succinate--CoA ligase [ADP-forming] subunit beta (388 aa).

Residues 9-244 (KQLFARYGLP…QSQEDPREAQ (236 aa)) enclose the ATP-grasp domain. ATP contacts are provided by residues Lys46, 53 to 55 (GRG), Glu99, Thr102, and Glu107. Mg(2+) contacts are provided by Asn199 and Asp213. Residues Asn264 and 321–323 (GIV) contribute to the substrate site.

This sequence belongs to the succinate/malate CoA ligase beta subunit family. As to quaternary structure, heterotetramer of two alpha and two beta subunits. It depends on Mg(2+) as a cofactor.

It catalyses the reaction succinate + ATP + CoA = succinyl-CoA + ADP + phosphate. The catalysed reaction is GTP + succinate + CoA = succinyl-CoA + GDP + phosphate. Its pathway is carbohydrate metabolism; tricarboxylic acid cycle; succinate from succinyl-CoA (ligase route): step 1/1. Succinyl-CoA synthetase functions in the citric acid cycle (TCA), coupling the hydrolysis of succinyl-CoA to the synthesis of either ATP or GTP and thus represents the only step of substrate-level phosphorylation in the TCA. The beta subunit provides nucleotide specificity of the enzyme and binds the substrate succinate, while the binding sites for coenzyme A and phosphate are found in the alpha subunit. The chain is Succinate--CoA ligase [ADP-forming] subunit beta from Enterobacter sp. (strain 638).